A 164-amino-acid chain; its full sequence is UPF0303 protein Smed_2872 (164 aa).

The protein belongs to the UPF0303 family.

The sequence is that of UPF0303 protein Smed_2872 from Sinorhizobium medicae (strain WSM419) (Ensifer medicae).